Here is a 494-residue protein sequence, read N- to C-terminus: Protein nucleotidyltransferase YdiU (494 aa).

The ATP site is built by G99, G101, R102, K118, D130, G131, R181, and R188. D261 functions as the Proton acceptor in the catalytic mechanism. Mg(2+) is bound by residues N262 and D271. Position 271 (D271) interacts with ATP.

This sequence belongs to the SELO family. It depends on Mg(2+) as a cofactor. Mn(2+) serves as cofactor.

It catalyses the reaction L-seryl-[protein] + ATP = 3-O-(5'-adenylyl)-L-seryl-[protein] + diphosphate. The enzyme catalyses L-threonyl-[protein] + ATP = 3-O-(5'-adenylyl)-L-threonyl-[protein] + diphosphate. It carries out the reaction L-tyrosyl-[protein] + ATP = O-(5'-adenylyl)-L-tyrosyl-[protein] + diphosphate. The catalysed reaction is L-histidyl-[protein] + UTP = N(tele)-(5'-uridylyl)-L-histidyl-[protein] + diphosphate. It catalyses the reaction L-seryl-[protein] + UTP = O-(5'-uridylyl)-L-seryl-[protein] + diphosphate. The enzyme catalyses L-tyrosyl-[protein] + UTP = O-(5'-uridylyl)-L-tyrosyl-[protein] + diphosphate. Its function is as follows. Nucleotidyltransferase involved in the post-translational modification of proteins. It can catalyze the addition of adenosine monophosphate (AMP) or uridine monophosphate (UMP) to a protein, resulting in modifications known as AMPylation and UMPylation. The sequence is that of Protein nucleotidyltransferase YdiU from Variovorax paradoxus (strain S110).